The primary structure comprises 118 residues: Myotrophin (118 aa).

Cys-2 is subject to N-acetylcysteine. One copy of the ANK 1 repeat lies at 2-30 (CDKEFMWALKNGDLDEVKDYVAKGEDVNR). 3 positions are modified to N6-acetyllysine: Lys-4, Lys-11, and Lys-24. A Phosphothreonine modification is found at Thr-31. ANK repeat units lie at residues 34–66 (GGRKPLHYAADCGQLEILEFLLLKGADINAPDK) and 67–99 (HHITPLLSAVYEGHVSCVKLLLSKGADKTVKGP).

This sequence belongs to the myotrophin family. Interacts with the heterodimer formed by CAPZA1 and CAPZB. Interacts with RELA.

The protein resides in the cytoplasm. Its subcellular location is the nucleus. It localises to the perinuclear region. Functionally, plays a role in the regulation of the growth of actin filaments. Inhibits the activity of the F-actin-capping protein complex formed by the CAPZA1 and CAPZB heterodimer. Promotes dimerization of NF-kappa-B subunits and regulates NF-kappa-B transcription factor activity. Promotes growth of cardiomyocytes, but not cardiomyocyte proliferation. Promotes cardiac muscle hypertrophy. The polypeptide is Myotrophin (Mtpn) (Rattus norvegicus (Rat)).